Reading from the N-terminus, the 423-residue chain is UDP-N-acetylglucosamine 1-carboxyvinyltransferase 1 (423 aa).

Residue 23 to 24 (KN) coordinates phosphoenolpyruvate. Residue arginine 96 coordinates UDP-N-acetyl-alpha-D-glucosamine. Cysteine 120 acts as the Proton donor in catalysis. Position 120 is a 2-(S-cysteinyl)pyruvic acid O-phosphothioketal (cysteine 120). The UDP-N-acetyl-alpha-D-glucosamine site is built by aspartate 309 and valine 331.

Belongs to the EPSP synthase family. MurA subfamily.

Its subcellular location is the cytoplasm. The catalysed reaction is phosphoenolpyruvate + UDP-N-acetyl-alpha-D-glucosamine = UDP-N-acetyl-3-O-(1-carboxyvinyl)-alpha-D-glucosamine + phosphate. It participates in cell wall biogenesis; peptidoglycan biosynthesis. Cell wall formation. Adds enolpyruvyl to UDP-N-acetylglucosamine. This is UDP-N-acetylglucosamine 1-carboxyvinyltransferase 1 from Streptococcus pyogenes serotype M1.